A 313-amino-acid chain; its full sequence is Ornithine carbamoyltransferase (313 aa).

Residues 61–64 (STRT), Gln88, Arg112, and 139–142 (HPCQ) contribute to the carbamoyl phosphate site. L-ornithine is bound by residues Asn170, Asp228, and 232 to 233 (SM). Carbamoyl phosphate is bound by residues 268 to 269 (CL) and Arg296.

This sequence belongs to the aspartate/ornithine carbamoyltransferase superfamily. OTCase family.

The protein resides in the cytoplasm. The catalysed reaction is carbamoyl phosphate + L-ornithine = L-citrulline + phosphate + H(+). It participates in amino-acid biosynthesis; L-arginine biosynthesis; L-arginine from L-ornithine and carbamoyl phosphate: step 1/3. Its function is as follows. Reversibly catalyzes the transfer of the carbamoyl group from carbamoyl phosphate (CP) to the N(epsilon) atom of ornithine (ORN) to produce L-citrulline. The chain is Ornithine carbamoyltransferase from Bordetella avium (strain 197N).